The sequence spans 237 residues: Ribonuclease PH (237 aa).

Phosphate-binding positions include arginine 86 and 124–126 (GTR).

The protein belongs to the RNase PH family. In terms of assembly, homohexameric ring arranged as a trimer of dimers.

The catalysed reaction is tRNA(n+1) + phosphate = tRNA(n) + a ribonucleoside 5'-diphosphate. Functionally, phosphorolytic 3'-5' exoribonuclease that plays an important role in tRNA 3'-end maturation. Removes nucleotide residues following the 3'-CCA terminus of tRNAs; can also add nucleotides to the ends of RNA molecules by using nucleoside diphosphates as substrates, but this may not be physiologically important. Probably plays a role in initiation of 16S rRNA degradation (leading to ribosome degradation) during starvation. The sequence is that of Ribonuclease PH from Rhodopseudomonas palustris (strain HaA2).